The primary structure comprises 291 residues: uncharacterized protein (291 aa).

Residues 191 to 289 enclose the HTH araC/xylS-type domain; sequence KQMLNWIHLH…NMTPLSYKKM (99 aa). DNA-binding regions (H-T-H motif) lie at residues 208–229 and 256–279; these read EDIA…KRML and VTEV…QQAM.

This is an uncharacterized protein from Bacillus subtilis (strain 168).